A 511-amino-acid chain; its full sequence is Pancreatic alpha-amylase (511 aa).

Residues methionine 1–alanine 15 form the signal peptide. At glutamine 16 the chain carries Pyrrolidone carboxylic acid. Intrachain disulfides connect cysteine 43–cysteine 101, cysteine 85–cysteine 130, and cysteine 156–cysteine 175. Ca(2+) contacts are provided by asparagine 115, arginine 173, and aspartate 182. Arginine 210 contacts chloride. Aspartate 212 acts as the Nucleophile in catalysis. Histidine 216 provides a ligand contact to Ca(2+). Glutamate 248 serves as the catalytic Proton donor. The chloride site is built by asparagine 313 and arginine 352. 2 cysteine pairs are disulfide-bonded: cysteine 393-cysteine 399 and cysteine 465-cysteine 477. Asparagine 476 carries N-linked (GlcNAc...) asparagine glycosylation.

The protein belongs to the glycosyl hydrolase 13 family. Monomer. Binds to the sea anemone inhibitor helianthamide. The cofactor is Ca(2+). Requires chloride as cofactor. In terms of tissue distribution, detected in pancreas (at protein level).

It localises to the secreted. The protein resides in the extracellular space. It catalyses the reaction Endohydrolysis of (1-&gt;4)-alpha-D-glucosidic linkages in polysaccharides containing three or more (1-&gt;4)-alpha-linked D-glucose units.. This is Pancreatic alpha-amylase (AMY2A) from Homo sapiens (Human).